We begin with the raw amino-acid sequence, 924 residues long: Exocyst complex component 2 (924 aa).

Residues 8–93 (PLVTGISPNE…GTSTVSFKLL (86 aa)) enclose the IPT/TIG domain. Residues 240-260 (QKLENVLNRASNTADTLFQEV) adopt a coiled-coil conformation. Residues S431, S432, and S435 each carry the phosphoserine modification. T440 is modified (phosphothreonine). K454 is modified (N6-acetyllysine).

The protein belongs to the SEC5 family. In terms of assembly, the exocyst complex is composed of EXOC1, EXOC2, EXOC3, EXOC4, EXOC5, EXOC6, EXOC7 and EXOC8. Interacts with EXOC3L1. Interacts with GNEFR/DELGEF; this interaction occurs only in the presence of magnesium or manganese and is stimulated by dCTP or GTP. Interacts with RALA and RALB. Interacts with ARL13B; regulates ARL13B localization to the cilium membrane.

It is found in the midbody. The protein resides in the midbody ring. Functionally, component of the exocyst complex involved in the docking of exocytic vesicles with fusion sites on the plasma membrane. This chain is Exocyst complex component 2 (Exoc2), found in Mus musculus (Mouse).